We begin with the raw amino-acid sequence, 392 residues long: Nuclear speckle splicing regulatory protein 1 homolog (392 aa).

Disordered stretches follow at residues 1 to 73 (MASK…IFDY), 113 to 169 (RQLE…AFND), and 187 to 357 (LLND…ARLD). Basic and acidic residues-rich tracts occupy residues 54 to 65 (KAAEREHQKAEA), 113 to 132 (RQLE…REKE), 149 to 160 (KQQEEVKKHREQ), 205 to 238 (QKNV…KSIY), and 313 to 357 (KSIE…ARLD). Residues 76–132 (NYDEIQAIKNEKKEEARKADKNRESKYAENIIKAHARRQLEQFSREERQQLREREKE) adopt a coiled-coil conformation.

This sequence belongs to the NSRP1 family. As to expression, expressed in the intestine, nervous system and head neurons in both larvae and adults. Expressed in the distal tip cell.

Its subcellular location is the cytoplasm. The protein resides in the nucleus. Functionally, required for the cessation of distal tip cell migration at the end of larval morphogenesis. The chain is Nuclear speckle splicing regulatory protein 1 homolog (ccdc-55) from Caenorhabditis elegans.